We begin with the raw amino-acid sequence, 626 residues long: Nuclear RNA export factor 2 (626 aa).

The residue at position 34 (Ser34) is a Phosphoserine. An RRM domain is found at 124 to 203 (WFKVTIPYGI…IFVNHSTAPY (80 aa)). LRR repeat units follow at residues 271-296 (ELLS…EKAP), 297-320 (KVKT…VKGL), 321-348 (KLEE…AIRD), and 349-376 (CFPK…ETMK). In terms of domain architecture, NTF2 spans 391-541 (LVLQFLQQYY…LCIVNDELFV (151 aa)). The TAP-C domain occupies 570–625 (QEQQEMVQAFSAQSGMKLEWSQKCLQDNEWNYTRAGQAFTMLQTEGKIPAEAFKQI).

This sequence belongs to the NXF family. As to quaternary structure, interacts with NXT1, NXT2, E1B-AP5, the REF proteins and with nucleoporins, Nup62, Nup153 and Nup214. Interacts with LUZP4. In terms of tissue distribution, expressed almost exclusively in testis. Also expressed in several cancers.

It localises to the nucleus. The protein resides in the nucleoplasm. The protein localises to the cytoplasm. In terms of biological role, involved in the export of mRNA from the nucleus to the cytoplasm. The protein is Nuclear RNA export factor 2 (NXF2) of Homo sapiens (Human).